We begin with the raw amino-acid sequence, 121 residues long: Basic phospholipase A2 homolog piratoxin-1 (121 aa).

7 disulfide bridges follow: C26–C115, C28–C44, C43–C95, C49–C121, C50–C88, C57–C81, and C75–C86. The interval 105 to 117 (KLYRYHLKPFCKK) is important for membrane-damaging activities in eukaryotes and bacteria; heparin-binding.

Belongs to the phospholipase A2 family. Group II subfamily. K49 sub-subfamily. Homodimer; non-covalently linked. In terms of tissue distribution, expressed by the venom gland.

The protein resides in the secreted. With respect to regulation, rosmarinic acid inhibits the myotoxic activity. Bromophenacyl bromide (BPB) inhibits the myotoxic activity through a covalent binding. Caffeic acid and aristolochic acid, two plant compounds used in folk medicine used to treat envenomation, inhibit the myotoxic activity. Functionally, snake venom phospholipase A2 (PLA2) homolog that lacks enzymatic activity. Is myotoxic and displays edema-inducing activities. Induces neuromuscular blockage. A model of myotoxic mechanism has been proposed: an apo Lys49-PLA2 is activated by the entrance of a hydrophobic molecule (e.g. fatty acid) at the hydrophobic channel of the protein leading to a reorientation of a monomer. This reorientation causes a transition between 'inactive' to 'active' states, causing alignment of C-terminal and membrane-docking sites (MDoS) side-by-side and putting the membrane-disruption sites (MDiS) in the same plane, exposed to solvent and in a symmetric position for both monomers. The MDoS region stabilizes the toxin on membrane by the interaction of charged residues with phospholipid head groups. Subsequently, the MDiS region destabilizes the membrane with penetration of hydrophobic residues. This insertion causes a disorganization of the membrane, allowing an uncontrolled influx of ions (i.e. calcium and sodium), and eventually triggering irreversible intracellular alterations and cell death. The sequence is that of Basic phospholipase A2 homolog piratoxin-1 from Bothrops pirajai (Piraja's lancehead).